The sequence spans 886 residues: Cadherin-1 (886 aa).

A signal peptide spans 1 to 23 (MGARCRSFSALLLLLQVSSWLCQ). Residues 24–158 (QPESESDSCR…FHQGLRRQKR (135 aa)) constitute a propeptide that is removed on maturation. Over 24–713 (QPESESDSCR…SLEAGLQVPA (690 aa)) the chain is Extracellular. Cadherin domains follow at residues 159 to 266 (DWVI…RPEF), 267 to 379 (IQEV…APIF), 380 to 490 (NPST…APIF), 491 to 597 (VPAE…DNAP), and 598 to 701 (IPEP…NCMK). Asp-261 contacts Ca(2+). O-linked (Man...) serine glycans are attached at residues Ser-284 and Ser-289. Asp-292 provides a ligand contact to Ca(2+). Residues Thr-362, Thr-474, Thr-476, and Thr-513 are each glycosylated (O-linked (Man...) threonine). An N-linked (GlcNAc...) asparagine glycan is attached at Asn-562. O-linked (Man...) threonine glycans are attached at residues Thr-580, Thr-582, and Thr-584. N-linked (GlcNAc...) asparagine glycosylation is present at Asn-641. Residues 714–734 (ILGILGGILALLILILLLLLF) traverse the membrane as a helical segment. The Cytoplasmic segment spans residues 735-886 (LRRRTVVKEP…ADMYGGGEED (152 aa)). Residues 751-771 (DTRDNVYYYDEEGGGEEDQDF) are disordered. A phosphotyrosine; by SRC mark is found at Tyr-757, Tyr-758, and Tyr-759. Acidic residues predominate over residues 759–771 (YDEEGGGEEDQDF). The tract at residues 762–773 (EGGGEEDQDFDL) is required for binding CTNND1 and PSEN1. Residues Ser-774, Ser-797, Ser-842, Ser-844, and Ser-850 each carry the phosphoserine modification. The required for binding alpha, beta and stretch occupies residues 815–886 (IDENLKAADS…ADMYGGGEED (72 aa)).

Homodimer; disulfide-linked. Component of an E-cadherin/ catenin adhesion complex composed of at least E-cadherin/CDH1, beta-catenin/CTNNB1 or gamma-catenin/JUP, and potentially alpha-catenin/CTNNA1; the complex is located to adherens junctions. Found in a complex composed of CDH1, RAP1A and PKP3; PKP3 acts as a scaffold protein within the complex, the complex is required for CDH1 localization to mature desmosome cell junctions. Interacts with the TRPV4 and CTNNB1 complex. Interacts with CTNND1. The stable association of CTNNA1 is controversial as CTNNA1 was shown not to bind to F-actin when assembled in the complex. Alternatively, the CTNNA1-containing complex may be linked to F-actin by other proteins such as LIMA1. Interaction with PSEN1, cleaves CDH1 resulting in the disassociation of cadherin-based adherens junctions (CAJs). Interacts with AJAP1 and DLGAP5. Interacts with TBC1D2. Interacts with LIMA1. Interacts with CAV1. Interacts with PIP5K1C. Interacts with DDR1; this stabilizes CDH1 at the cell surface and inhibits its internalization. Interacts with RAPGEF2. Interacts with RAB8B. Interacts with KLRG1. Forms a ternary complex composed of ADAM10, CADH1 and EPHA4; within the complex, CADH1 is cleaved by ADAM10 which disrupts adherens junctions. Interacts with SPEF1. Interacts with CTNNB1 and PKP2. Interacts with AMOTL2; the interaction may facilitate binding of radial actin fibers to cell junction complexes. Interacts with DSG3; the interaction is required for CDH1 localization to developing adherens junctions. Post-translationally, during apoptosis or with calcium influx, cleaved by a membrane-bound metalloproteinase (ADAM10), PS1/gamma-secretase and caspase-3. Processing by the metalloproteinase, induced by calcium influx, causes disruption of cell-cell adhesion and the subsequent release of beta-catenin into the cytoplasm. The residual membrane-tethered cleavage product is rapidly degraded via an intracellular proteolytic pathway. Cleavage by caspase-3 releases the cytoplasmic tail resulting in disintegration of the actin microfilament system. The gamma-secretase-mediated cleavage promotes disassembly of adherens junctions. During development of the cochlear organ of Corti, cleavage by ADAM10 at adherens junctions promotes pillar cell separation. N-glycosylation at Asn-641 is essential for expression, folding and trafficking. Addition of bisecting N-acetylglucosamine by MGAT3 modulates its cell membrane location. In terms of processing, ubiquitinated by a SCF complex containing SKP2, which requires prior phosphorylation by CK1/CSNK1A1. Ubiquitinated by CBLL1/HAKAI, requires prior phosphorylation at Tyr-758. Post-translationally, O-glycosylated. O-manosylated by TMTC1, TMTC2, TMTC3 or TMTC4. Ser-289 and Thr-513 are O-manosylated by TMTC2 or TMTC4 but not TMTC1 or TMTC3.

The protein localises to the cell junction. Its subcellular location is the adherens junction. It is found in the cell membrane. The protein resides in the endosome. It localises to the golgi apparatus. The protein localises to the trans-Golgi network. Its subcellular location is the cytoplasm. It is found in the desmosome. Its function is as follows. Cadherins are calcium-dependent cell adhesion proteins. They preferentially interact with themselves in a homophilic manner in connecting cells; cadherins may thus contribute to the sorting of heterogeneous cell types. CDH1 is involved in mechanisms regulating cell-cell adhesions, mobility and proliferation of epithelial cells. Promotes organization of radial actin fiber structure and cellular response to contractile forces, via its interaction with AMOTL2 which facilitates anchoring of radial actin fibers to CDH1 junction complexes at the cell membrane. Plays a role in the early stages of desmosome cell-cell junction formation via facilitating the recruitment of DSG2 and DSP to desmosome plaques. Has a potent invasive suppressor role. It is a ligand for integrin alpha-E/beta-7. In terms of biological role, E-Cad/CTF2 promotes non-amyloidogenic degradation of Abeta precursors. Has a strong inhibitory effect on APP C99 and C83 production. This chain is Cadherin-1 (Cdh1), found in Rattus norvegicus (Rat).